Consider the following 122-residue polypeptide: MINKTNRNKIRLRKHLRVRKKITGTAERPRMNVFRSLNNIYVQIIDDTTGNTLVSASTLDAALKGKVAKGGNKEAAKEVGKLVASKAIDKGIKKVVFDRGGYIYHGRIKELADAAREAGLDF.

It belongs to the universal ribosomal protein uL18 family. As to quaternary structure, part of the 50S ribosomal subunit; part of the 5S rRNA/L5/L18/L25 subcomplex. Contacts the 5S and 23S rRNAs.

This is one of the proteins that bind and probably mediate the attachment of the 5S RNA into the large ribosomal subunit, where it forms part of the central protuberance. The chain is Large ribosomal subunit protein uL18 from Ruminiclostridium cellulolyticum (strain ATCC 35319 / DSM 5812 / JCM 6584 / H10) (Clostridium cellulolyticum).